The chain runs to 189 residues: Elongation factor P (189 aa).

It belongs to the elongation factor P family.

It is found in the cytoplasm. Its pathway is protein biosynthesis; polypeptide chain elongation. Involved in peptide bond synthesis. Stimulates efficient translation and peptide-bond synthesis on native or reconstituted 70S ribosomes in vitro. Probably functions indirectly by altering the affinity of the ribosome for aminoacyl-tRNA, thus increasing their reactivity as acceptors for peptidyl transferase. In Campylobacter lari (strain RM2100 / D67 / ATCC BAA-1060), this protein is Elongation factor P.